Reading from the N-terminus, the 312-residue chain is Olfactory receptor 4F6 (312 aa).

At 1–25 (MDEANHSVVSEFVFLGLSDSRKIQL) the chain is on the extracellular side. Asparagine 5 is a glycosylation site (N-linked (GlcNAc...) asparagine). The chain crosses the membrane as a helical span at residues 26–49 (LLFLFFSVFYVSSLMGNLLIVLTV). Over 50–57 (TSDPRLQS) the chain is Cytoplasmic. Residues 58-79 (PMYFLLANLSIINLVFCSSTAP) traverse the membrane as a helical segment. At 80–100 (KMIYDLFRKHKTISFGGCVVQ) the chain is on the extracellular side. Cysteine 97 and cysteine 189 are disulfide-bonded. Residues 101–120 (IFFIHAVGGTEMVLLIAMAF) traverse the membrane as a helical segment. Over 121 to 139 (DRYVAICKPLHYLTIMNPQ) the chain is Cytoplasmic. Residues 140 to 158 (RCILFLVISWIIGIIHSVI) form a helical membrane-spanning segment. Over 159–195 (QLAFVVDLLFCGPNELDSFFCDLPRFIKLACIETYTL) the chain is Extracellular. Residues 196–219 (GFMVTANSGFISLASFLILIISYI) traverse the membrane as a helical segment. At 220–235 (FILVTVQKKSSGGIFK) the chain is on the cytoplasmic side. A helical membrane pass occupies residues 236 to 258 (AFSMLSAHVIVVVLVFGPLIFFY). The Extracellular portion of the chain corresponds to 259-269 (IFPFPTSHLDK). Residues 270-289 (FLAIFDAVITPVLNPVIYTF) traverse the membrane as a helical segment. Residues 290–312 (RNKEMMVAMRRRCSQFVNYSKIF) are Cytoplasmic-facing.

Belongs to the G-protein coupled receptor 1 family.

Its subcellular location is the cell membrane. Its function is as follows. Odorant receptor. The polypeptide is Olfactory receptor 4F6 (OR4F6) (Homo sapiens (Human)).